A 63-amino-acid polypeptide reads, in one-letter code: Large ribosomal subunit protein bL28 (63 aa).

This sequence belongs to the bacterial ribosomal protein bL28 family.

The sequence is that of Large ribosomal subunit protein bL28 from Clostridium perfringens (strain ATCC 13124 / DSM 756 / JCM 1290 / NCIMB 6125 / NCTC 8237 / Type A).